Here is a 132-residue protein sequence, read N- to C-terminus: MSNKFLGTWKLVSSENFDDYMKALGVGLATRKLGNLAKPRVIISKKGDIITIRTESTFKNTEISFKLGQEFEETTADNRKAKSVVTLARGSLNQVQKWDGKETTIKRKLVDGKMVVECKMKDVVCTRIYEKV.

N-acetylserine is present on S2. R107 lines the (9Z)-octadecenoate pocket. R107 provides a ligand contact to hexadecanoate. C118 and C125 are disulfide-bonded. 127-129 (RIY) lines the (9Z)-octadecenoate pocket. 127–129 (RIY) serves as a coordination point for hexadecanoate.

The protein belongs to the calycin superfamily. Fatty-acid binding protein (FABP) family. Monomer.

The protein localises to the cytoplasm. Its function is as follows. May play a role in lipid transport protein in Schwann cells. May bind cholesterol. The sequence is that of Myelin P2 protein from Sus scrofa (Pig).